The sequence spans 137 residues: Endoribonuclease YbeY (137 aa).

The Zn(2+) site is built by histidine 107, histidine 111, and aspartate 117.

This sequence belongs to the endoribonuclease YbeY family. The cofactor is Zn(2+).

It is found in the cytoplasm. In terms of biological role, single strand-specific metallo-endoribonuclease involved in late-stage 70S ribosome quality control and in maturation of the 3' terminus of the 16S rRNA. This is Endoribonuclease YbeY from Bacteroides thetaiotaomicron (strain ATCC 29148 / DSM 2079 / JCM 5827 / CCUG 10774 / NCTC 10582 / VPI-5482 / E50).